Reading from the N-terminus, the 428-residue chain is Synaptotagmin-1 (428 aa).

Over 1-67 (MDSLLARVKR…KDKLINEIEN (67 aa)) the chain is Vesicular. Residues 16-50 (ALNPAQEGVTGGPDAAGLPDVSTSSPGGGGAGDKL) form a disordered region. A helical transmembrane segment spans residues 68–92 (LPIWAIVLIIAGSLLFLVCCVYCVC). Over 93 to 428 (RRSCRKRKKK…HTLQEVPEKN (336 aa)) the chain is Cytoplasmic. Ser-123 carries the post-translational modification Phosphoserine; by PRKC2. The phospholipid binding stretch occupies residues 147–395 (STKSEVKLGK…PIGRCVLGCN (249 aa)). C2 domains are found at residues 153-272 (KLGK…EDWK) and 286-419 (KLGD…AQWH). Ca(2+)-binding residues include Asp-184, Asp-190, Asp-242, Phe-243, Asp-244, Ser-247, Lys-248, Asp-250, Asp-317, Asp-323, Asp-377, and Asp-379.

It belongs to the synaptotagmin family. As to quaternary structure, binds SNAP25. Isoform 3 binds SNAP25 with higher affinity. It depends on Ca(2+) as a cofactor.

It is found in the cytoplasmic vesicle. The protein resides in the secretory vesicle. Its subcellular location is the synaptic vesicle membrane. The protein localises to the synapse. Acts as inhibitor of neurotransmitter release. Overexpression leads to a decrease in the amplitude of the excitatory postsynaptic potential in dissected cholinergic and glutaminergic neurons while depletion with antisense oligonucleotides leads to an increase. Overexpression of isoform 1 blocks the reversal of synaptic depression by serotonin in sensory neurons. The protein is Synaptotagmin-1 (SYT1) of Aplysia californica (California sea hare).